Here is a 692-residue protein sequence, read N- to C-terminus: ATP-dependent RNA helicase MSS116, mitochondrial (692 aa).

Residues 1 to 37 (MMIARFGKQVLRKNVLVSNRIHFPVISRGFHNSFINK) constitute a mitochondrion transit peptide. The interval 82 to 113 (SQVTEQTELTKSEEEEKKKKNINTNTNKNDRK) is disordered. Basic and acidic residues predominate over residues 89–99 (ELTKSEEEEKK). A Q motif motif is present at residues 130–158 (DFKNTGLIDDVILRALDRAHFKDLTPIQQ). Residues 162–349 (VPLLETERGM…KQHINKKYDY (188 aa)) form the Helicase ATP-binding domain. Residue 175–182 (AKTGTGKT) participates in ATP binding. The DEAD box signature appears at 290-293 (DEAD). A Helicase C-terminal domain is found at 384 to 534 (YVNQLVKDSP…QVHESSEIDN (151 aa)). The segment at 643–692 (NRYSGGGGNRSEKRFSFAGRGGNSGGHSGRGRGGRSGYSGGRSSQYSDWE) is disordered. The segment covering 661–670 (GRGGNSGGHS) has biased composition (gly residues).

Belongs to the DEAD box helicase family. DDX18/HAS1 subfamily.

The protein localises to the mitochondrion matrix. It carries out the reaction ATP + H2O = ADP + phosphate + H(+). In terms of biological role, ATP-dependent RNA helicase required for mitochondrial splicing of group I and II introns. Also required for efficient mitochondrial translation. In Lodderomyces elongisporus (strain ATCC 11503 / CBS 2605 / JCM 1781 / NBRC 1676 / NRRL YB-4239) (Yeast), this protein is ATP-dependent RNA helicase MSS116, mitochondrial (MSS116).